A 331-amino-acid chain; its full sequence is Beta-ketoacyl-[acyl-carrier-protein] synthase III (331 aa).

Active-site residues include Cys-115 and His-255. Residues 256 to 260 (QANFR) form an ACP-binding region. Asn-285 is an active-site residue.

This sequence belongs to the thiolase-like superfamily. FabH family. Homodimer.

It is found in the cytoplasm. It catalyses the reaction malonyl-[ACP] + acetyl-CoA + H(+) = 3-oxobutanoyl-[ACP] + CO2 + CoA. It participates in lipid metabolism; fatty acid biosynthesis. Catalyzes the condensation reaction of fatty acid synthesis by the addition to an acyl acceptor of two carbons from malonyl-ACP. Catalyzes the first condensation reaction which initiates fatty acid synthesis and may therefore play a role in governing the total rate of fatty acid production. Possesses both acetoacetyl-ACP synthase and acetyl transacylase activities. Its substrate specificity determines the biosynthesis of branched-chain and/or straight-chain of fatty acids. The sequence is that of Beta-ketoacyl-[acyl-carrier-protein] synthase III from Helicobacter pylori (strain ATCC 700392 / 26695) (Campylobacter pylori).